Here is a 248-residue protein sequence, read N- to C-terminus: Mannose-binding protein C (248 aa).

A signal peptide spans Met1–Ser20. The 58-residue stretch at Gly42–Lys99 folds into the Collagen-like domain. Residues Ile43–Leu107 form a disordered region. Pro47 is subject to 4-hydroxyproline. The span at Lys49–Glu61 shows a compositional bias: basic and acidic residues. A 4-hydroxyproline mark is found at Pro73, Pro79, Pro82, and Pro88. The span at Lys75–Ser87 shows a compositional bias: pro residues. A compositionally biased stretch (basic and acidic residues) spans Gln93 to Asp102. Positions Arg112–Leu130 form a coiled coil. Residues Val134–Glu245 enclose the C-type lectin domain. 2 disulfides stabilise this stretch: Cys155-Cys244 and Cys222-Cys236.

In terms of assembly, oligomeric complex of 3 or more homotrimers. Interacts with MASP1 and MASP2. Interacts with MEP1A and MEP1B and may inhibit their catalytic activity. Post-translationally, hydroxylation on proline residues within the sequence motif, GXPG, is most likely to be 4-hydroxy as this fits the requirement for 4-hydroxylation in vertebrates.

The protein localises to the secreted. Calcium-dependent lectin involved in innate immune defense. Binds mannose, fucose and N-acetylglucosamine on different microorganisms and activates the lectin complement pathway. Binds to late apoptotic cells, as well as to apoptotic blebs and to necrotic cells, but not to early apoptotic cells, facilitating their uptake by macrophages. The sequence is that of Mannose-binding protein C (MBL2) from Hylobates lar (Lar gibbon).